We begin with the raw amino-acid sequence, 296 residues long: Probable AP endonuclease (296 aa).

Residues Cys16 and Cys20 are joined by a disulfide bond. Zn(2+) contacts are provided by His78, His115, Glu142, His182, His218, Asp231, His233, and Glu271.

Belongs to the AP endonuclease 2 family. The cofactor is Zn(2+).

Its subcellular location is the host nucleus. The protein resides in the host cytoplasm. It localises to the virion. In terms of biological role, endonuclease that plays a role in DNA repair. Cleaves phosphodiester bonds on the 5' side of apurinic or apyrimidinic sites (AP sites). In addition to endonuclease activity, the ASFV enzyme has a proofreading 3'-5' exonuclease activity that is considerably more efficient in the elimination of a mismatch than in that of a correctly paired base. Displays 3'-phosphatase and 3'-repair diesterase activities. The single nucleotide gaps generated by the AP endonuclease are filled by the viral AP endonuclease and DNA ligase. The protein is Probable AP endonuclease of Ornithodoros (relapsing fever ticks).